An 81-amino-acid chain; its full sequence is AANQHLCGSHLVEALYLVCGERGFFYSPKTXXDVEQPLVNGPLHGEVGELPFQHEEYQXXGIVEQCCENPCSLYQLENYCN.

Disulfide bonds link Cys-7/Cys-67, Cys-19/Cys-80, and Cys-66/Cys-71. Positions Asp-33–Gln-58 are cleaved as a propeptide — c peptide.

The protein belongs to the insulin family. As to quaternary structure, heterodimer of a B chain and an A chain linked by two disulfide bonds.

It is found in the secreted. In terms of biological role, insulin decreases blood glucose concentration. It increases cell permeability to monosaccharides, amino acids and fatty acids. It accelerates glycolysis, the pentose phosphate cycle, and glycogen synthesis in liver. This chain is Insulin (INS), found in Anas platyrhynchos (Mallard).